The sequence spans 880 residues: Phosphoinositide 3-kinase regulatory subunit 5 (880 aa).

The residue at position 1 (methionine 1) is an N-acetylmethionine. Residues 25-101 (SLSRRSTSWS…TPHFPPDSDL (77 aa)) are heterodimerization. Disordered regions lie at residues 315-339 (GILG…TDGH), 389-416 (SGYV…GHRR), 454-510 (RRAG…SGDE), and 565-601 (HGTS…TPWE). Acidic residues predominate over residues 318–335 (GDDEEEEEEEEEVEEDLE). A phosphoserine mark is found at serine 458 and serine 507. Residues 571–585 (ACPPPRSQTPSPPTD) are compositionally biased toward pro residues. Residues 653 to 753 (PILADMLLYY…WSNLEKVCTS (101 aa)) form an interaction with beta-gamma G protein dimers region.

Heterodimer of a catalytic subunit (PIK3CG/p120) and a regulatory (PIK3R5a/p101) subunit. Interacts with beta-gamma G protein dimers. Ubiquitously expressed with high expression in fetal brain compared to adult brain. Abundant expression is observed in cerebellum, cerebral cortex, cerebral meninges, and vermis cerebelli.

It is found in the nucleus. The protein localises to the cytoplasm. The protein resides in the cell membrane. With respect to regulation, greatly activated by G gamma proteins. In terms of biological role, regulatory subunit of the PI3K gamma complex. Required for recruitment of the catalytic subunit to the plasma membrane via interaction with beta-gamma G protein dimers. Required for G protein-mediated activation of PIK3CG. The chain is Phosphoinositide 3-kinase regulatory subunit 5 (PIK3R5) from Homo sapiens (Human).